A 140-amino-acid chain; its full sequence is Profilin-1 (140 aa).

Position 2 is an N-acetylalanine (Ala-2). At Ser-28 the chain carries Phosphoserine. Lys-54 participates in a covalent cross-link: Glycyl lysine isopeptide (Lys-Gly) (interchain with G-Cter in SUMO2); alternate. Residue Lys-54 forms a Glycyl lysine isopeptide (Lys-Gly) (interchain with G-Cter in ubiquitin); alternate linkage. 2 positions are modified to phosphoserine: Ser-57 and Ser-85. Residues Lys-105 and Lys-108 each carry the N6-acetyllysine modification. A Phosphotyrosine modification is found at Tyr-129. Ser-138 bears the Phosphoserine; by ROCK1 mark.

The protein belongs to the profilin family. In terms of assembly, found in a complex with XPO6, Ran, ACTB and PFN1. Interacts with ACTB. Interacts with VASP. Interacts with HTT. Interacts with SH3BGRL. Occurs in many kinds of cells as a complex with monomeric actin in a 1:1 ratio. Interacts with ACTMAP. Phosphorylation at Ser-138 reduces its affinity for G-actin and blocks its interaction with HTT, reducing its ability to inhibit androgen receptor (AR) and HTT aggregation. As to expression, expressed in epididymis (at protein level).

It is found in the cytoplasm. The protein localises to the cytoskeleton. Its function is as follows. Binds to actin and affects the structure of the cytoskeleton. At high concentrations, profilin prevents the polymerization of actin, whereas it enhances it at low concentrations. By binding to PIP2, it inhibits the formation of IP3 and DG. Inhibits androgen receptor (AR) and HTT aggregation and binding of G-actin is essential for its inhibition of AR. In Homo sapiens (Human), this protein is Profilin-1 (PFN1).